The following is a 392-amino-acid chain: Probable nucleoredoxin 3 (392 aa).

Thioredoxin domains lie at 17–171 (LYSI…DSKR) and 177–326 (EKLL…ELKA).

The protein belongs to the nucleoredoxin family.

The enzyme catalyses [protein]-dithiol + NAD(+) = [protein]-disulfide + NADH + H(+). It carries out the reaction [protein]-dithiol + NADP(+) = [protein]-disulfide + NADPH + H(+). In terms of biological role, probable thiol-disulfide oxidoreductase that may participate in various redox reactions. This Arabidopsis thaliana (Mouse-ear cress) protein is Probable nucleoredoxin 3.